Consider the following 977-residue polypeptide: MSSSNNAAAAAASPDPSRRREDVVGWLLALFPDLPLPPPPEATDEDLRAALATGRLLCALLRRLCPGALLDDASTDNVGRFRAAVERMGVAKFSASDLERGQMTAVVNCILALKDRFGSRGGDDHRNPGFLTRCDSEGGRKRVESKLQRMLTSPIMSGIPGVDKLTIATDFVMVFQLKQGGYADQLGGKYSDLLKSTSLDNAPTQSLLGVFNSILDESIERKNGQIPYRIACLLRKVILEIERRISTQAGHIRNQNNLIKAREEKYQSRIRVLEVLAGGVSGQTHEKEGMINLKTVKAEETQRIEDEESKKEDVARLLTDKENNDSIISELKKELEETKRLHEAHSQQLETKAAQVSKELEQRIEEVKLMLDDSTKRRIELEELSETRIQFWKKKEVVIDQFVSLQVQNVQDLKLSSVSVRHEILNCQNKWSEELAGLGKSLKVVTNTAEKYHGALAENRKLFNEIQELKGNIRVYCRIRPFRPGEDDKSSSVEYIGDNGELVLSNPTKQGKEGGKNFTFNKVFGPITTQDAVFKDIQPLIRSVLDGYNVCIFAYGQTGSGKTYTMMGPEKATEKEWGVNYRALNDLFNISHDRRDTITYELGVQMIEIYNEQIRDLLGSGGVQKKLGIQNTIQPNGLAVPDATMCPVTSTSHVIELMQTGHDNRAMSATALNERSSRSHSVVTIHVRGQDLKTGNTLRGALHLVDLAGSERVDRSAVTGDRLKEAQHINKSLAALGDVIFSLSQKNAHVPYRNSKLTQVLQTSLGGHAKTLMFVQVNPDVSSYTETLSTLKFAERVSGVELGVARSNKEGKEGKDVKELMDQLSLLKDTISKKDEEIDRLQLLNSSTRLKPTRQADSVLKHSSSSPGITSLGKGTSVGSGAASDLDNFSDTSDRQSEAGSMLSVDPEISGLADVDSDGRTRAVNRVQKLTLPKAGQSSSLRPKPRDPAPAATGVRKSSTSQATPLARNNSTLKRGP.

Positions 1 to 13 are enriched in low complexity; it reads MSSSNNAAAAAAS. Residues 1-20 are disordered; sequence MSSSNNAAAAAASPDPSRRR. A Calponin-homology (CH) domain is found at 17 to 118; that stretch reads SRRREDVVGW…CILALKDRFG (102 aa). Positions 297–384 form a coiled coil; sequence KAEETQRIED…TKRRIELEEL (88 aa). The 329-residue stretch at 472–800 folds into the Kinesin motor domain; it reads NIRVYCRIRP…LKFAERVSGV (329 aa). 556–563 contributes to the ATP binding site; that stretch reads GQTGSGKT. The stretch at 812–847 forms a coiled coil; that stretch reads KEGKDVKELMDQLSLLKDTISKKDEEIDRLQLLNSS. The segment at 852–977 is disordered; sequence PTRQADSVLK…RNNSTLKRGP (126 aa). Composition is skewed to polar residues over residues 861–879 and 956–977; these read KHSSSSPGITSLGKGTSVG and RKSSTSQATPLARNNSTLKRGP.

It belongs to the TRAFAC class myosin-kinesin ATPase superfamily. Kinesin family. KIN-14 subfamily.

This chain is Kinesin-like protein KIN-14D, found in Oryza sativa subsp. japonica (Rice).